An 81-amino-acid polypeptide reads, in one-letter code: Putative defensin-like protein 26 (81 aa).

An N-terminal signal peptide occupies residues 1–21; sequence MASLKVFSFALLIVLTFSVIG. 2 cysteine pairs are disulfide-bonded: Cys33–Cys81 and Cys52–Cys77.

This sequence belongs to the DEFL family.

The protein resides in the secreted. This Arabidopsis thaliana (Mouse-ear cress) protein is Putative defensin-like protein 26.